The sequence spans 488 residues: MPKVKALQCALALEIRSVTCPGVLLKDKEDIYLSICVFGQYKKTQCVPATFPLVFNARMVFEKVFPEAVDPGDVVAQLEYDTAVFELIQLVPPVGETLSTYDENTRDFMFPGPNQISGHHDSNRQVTMRRISGLRGIAPKLEFSTTSVITECLISSRKCRTQDKFTYHSAPVEKPHGRLQCRTSRSQKKKSKSPERSKYCINTKNYEQPTISSKSHSPSPYTKRRMCELSEDTRRRLAHLNLGPYEFKKETDKPPFVIRHVDPPSPRADNFFGSPGRDCERDGWVRMHSDHPHLGCCRAKDYKVIRSPHGRDFEDPFERCEDYLSPRTCSKPQHSARTLLVHSAPSTTPKHCASPVLNRASLRERFHSDWCSPPNCDEIHDRVKDVLKSHQAHGRHLCEERDPEKEDELELKRSLLYRDSAYDSDPEYSSFQRPRGSFHLDDGECWSNRAASCKGKSHRPVFENSMDKMYRNLYQKACSSVSHTQESF.

The N-terminal stretch at M1–S17 is a signal peptide. The interval P175 to R225 is disordered. The span at C200 to P220 shows a compositional bias: polar residues. 2 positions are modified to phosphoserine: S217 and S219. A Glycyl lysine isopeptide (Lys-Gly) (interchain with G-Cter in SUMO2) cross-link involves residue K248. Phosphoserine is present on residues S265, S274, S325, S343, S346, S354, S424, S465, and S487.

It belongs to the SPATA6 family. As to quaternary structure, interacts with MYL6. As to expression, testis-specific, in spermatocytes.

The protein resides in the secreted. The protein localises to the cell projection. It localises to the cilium. Its subcellular location is the flagellum. Its function is as follows. Required for formation of the sperm connecting piece during spermiogenesis. Sperm connecting piece is essential for linking the developing flagellum to the head during late spermiogenesis. May be involved in myosin-based microfilament transport through interaction with myosin subunits. This Rattus norvegicus (Rat) protein is Spermatogenesis-associated protein 6 (Spata6).